The following is a 222-amino-acid chain: UPF0688 protein C1orf174 homolog (222 aa).

Disordered regions lie at residues 23–57 (STSL…RTSK) and 98–158 (EDGA…EPVP). A compositionally biased stretch (polar residues) spans 33-48 (ASSTSAKTTCLASSSH). Residues 121–131 (VSEEPSVKAEE) show a composition bias toward basic and acidic residues. A Phosphoserine modification is found at Ser-172.

Belongs to the UPF0688 family.

It is found in the nucleus. This Rattus norvegicus (Rat) protein is UPF0688 protein C1orf174 homolog.